An 873-amino-acid chain; its full sequence is Alanine--tRNA ligase (873 aa).

Positions 559, 563, 661, and 665 each coordinate Zn(2+).

This sequence belongs to the class-II aminoacyl-tRNA synthetase family. As to quaternary structure, homotetramer. Requires Zn(2+) as cofactor.

It is found in the cytoplasm. It carries out the reaction tRNA(Ala) + L-alanine + ATP = L-alanyl-tRNA(Ala) + AMP + diphosphate. Functionally, catalyzes the attachment of alanine to tRNA(Ala) in a two-step reaction: alanine is first activated by ATP to form Ala-AMP and then transferred to the acceptor end of tRNA(Ala). Also edits incorrectly charged Ser-tRNA(Ala) and Gly-tRNA(Ala) via its editing domain. The protein is Alanine--tRNA ligase of Wigglesworthia glossinidia brevipalpis.